The primary structure comprises 139 residues: Small ribosomal subunit protein uS11 (139 aa).

Belongs to the universal ribosomal protein uS11 family. Part of the 30S ribosomal subunit.

Located on the platform of the 30S subunit. The chain is Small ribosomal subunit protein uS11 from Pyrobaculum islandicum (strain DSM 4184 / JCM 9189 / GEO3).